A 174-amino-acid chain; its full sequence is Probable nicotinate-nucleotide adenylyltransferase (174 aa).

The protein belongs to the NadD family.

It carries out the reaction nicotinate beta-D-ribonucleotide + ATP + H(+) = deamido-NAD(+) + diphosphate. Its pathway is cofactor biosynthesis; NAD(+) biosynthesis; deamido-NAD(+) from nicotinate D-ribonucleotide: step 1/1. Its function is as follows. Catalyzes the reversible adenylation of nicotinate mononucleotide (NaMN) to nicotinic acid adenine dinucleotide (NaAD). The sequence is that of Probable nicotinate-nucleotide adenylyltransferase from Helicobacter pylori (strain HPAG1).